The chain runs to 319 residues: MSDNTLVSDYGMCEEEQVARIAWFYYHDGLTQSEISERLGLTRLKVSRLLEKGHQSGIIRVQINSRFEGCLEYENALRNHFALQNIRVLPALPDADIGLRLGIGAAHMLMESLRPQQLLAVGFGEATMTTLKRLSGFISAQQIRLVTLSGGVGPYMTGIGQLDAACSVSIMPAPLRASSQEIACTLRNENSVRDVMLTAQAADAAIVGIGAINQKDQASILKSGYITQGEQLMIGRKGAVGDILGYFFDAHGEIIPDIKIHNELIGLKLNSLSTIPTVIGVAGGEQKAEAIIAAMRGNYINALVTDQKTAGKIIQLIEK.

A DNA-binding region (H-T-H motif) is located at residues 32–55 (QSEISERLGLTRLKVSRLLEKGHQ).

This sequence belongs to the SorC transcriptional regulatory family.

It is found in the cytoplasm. With respect to regulation, inactivated by phosphorylated autoinducer-2 (phospho-AI-2). Phospho-AI-2 acts by binding to LsrR, which is then unable to bind to the promoter regions, allowing the transcription of the target genes. Transcriptional regulator that represses the expression of the lsr operon in the absence of the quorum-sensing signaling molecule autoinducer 2 (AI-2). It also represses the expression of the lsrRK operon. Acts by binding to the intergenic region between the lsr operon and lsrR. In the presence of phosphorylated autoinducer-2 (phospho-AI-2), LsrR is inactivated, leading to the transcription of the genes. This is Transcriptional regulator LsrR (lsrR) from Salmonella paratyphi A (strain ATCC 9150 / SARB42).